The following is an 8892-amino-acid chain: Nonribosomal peptide synthetase 32 (8892 aa).

One can recognise a Carrier 1 domain in the interval 12–85 (EPSKLVLGRV…QLAESIAQQN (74 aa)). Ser-46 carries the O-(pantetheine 4'-phosphoryl)serine modification. Residues 88 to 112 (AGNGVNGHANGNGMNGNGLHNEATI) are disordered. Residues 93–108 (NGHANGNGMNGNGLHN) are compositionally biased toward low complexity. The condensation 1 stretch occupies residues 567–956 (PTSANVPRRV…EGVDLSVRDF (390 aa)). The segment at 989-1386 (KMAEQPEALA…GRIDSQIKIR (398 aa)) is adenylation 1. The 77-residue stretch at 1523-1599 (ISATAVEREL…ELAAEVQATQ (77 aa)) folds into the Carrier 2 domain. Residue Ser-1560 is modified to O-(pantetheine 4'-phosphoryl)serine. An epimerization 1 region spans residues 1609–2039 (GAIALSPIQQ…YGQTVKSLVN (431 aa)). The condensation 2 stretch occupies residues 2083–2518 (EDILPCSPIQ…LLLPAEEAKL (436 aa)). The interval 2543–2934 (SQPEALAVSA…GRRDTQVKIR (392 aa)) is adenylation 2. One can recognise a Carrier 3 domain in the interval 3061 to 3137 (SSATPIEREL…ELAANSQTGR (77 aa)). At Ser-3098 the chain carries O-(pantetheine 4'-phosphoryl)serine. Positions 3153–3590 (LSPIQQMFFD…GDTVKTLVEE (438 aa)) are epimerization 2. The tract at residues 3634–4061 (EDILPCSAIQ…NVDRPLRELT (428 aa)) is condensation 3. Residues 4098–4488 (TLPEALAISS…GRIDSQIKIR (391 aa)) are adenylation 3. In terms of domain architecture, Carrier 4 spans 4627–4703 (APTTDLERKL…DLSRVVEEKC (77 aa)). Ser-4664 is modified (O-(pantetheine 4'-phosphoryl)serine). The segment at 4760–5181 (EDVYPCSPMQ…LLTDEDCDQL (422 aa)) is condensation 4. An adenylation 4 region spans residues 5205–5605 (TSYPTAPAIS…GRRDTQVKIR (401 aa)). Residues 5745-5821 (MPTTPMEQKL…DLAEAMEEKG (77 aa)) form the Carrier 5 domain. Ser-5782 carries the O-(pantetheine 4'-phosphoryl)serine modification. A condensation 5 region spans residues 5868–6285 (EDVYPCSPLQ…LLSPGQMAQI (418 aa)). The segment at 6307-6700 (QMTTRPAATA…GRIDTQIKIR (394 aa)) is adenylation 5. One can recognise a Carrier 6 domain in the interval 6834-6911 (ELTTTIERQL…ELATQTQTTE (78 aa)). Ser-6872 carries the O-(pantetheine 4'-phosphoryl)serine modification. Positions 6923 to 7360 (NFQLSPIQQM…SYSCAIESLV (438 aa)) are epimerization 3. A condensation 6 region spans residues 7403 to 7834 (VQDILPCSPI…LLPAGDANQI (432 aa)). An adenylation 6 region spans residues 7855 to 8253 (QQMAAHPTAQ…LDRIGTQVKI (399 aa)). The Carrier 7 domain maps to 8380–8456 (APVGRNEEIL…AMAARVTADI (77 aa)). Ser-8417 bears the O-(pantetheine 4'-phosphoryl)serine mark. The interval 8490–8878 (HFAFDATGPC…EIIEDSGCNV (389 aa)) is condensation 7.

Belongs to the NRP synthetase family.

It functions in the pathway secondary metabolite biosynthesis. Functionally, nonribosomal peptide synthetase; part of the gene cluster that mediates the biosynthesis of the lipopeptides W493 A and B. W493 A and B consist of six amino acid residues D-allo-thr, L-Ala, D-Ala, L-Gln, D-Tyr, and L-Val/L-Ile linked to a 3-hydroxy-4-methyltetradecanoic acid polyketide chain. The biosynthesis starts with formation of the linear polyketide chain by the highly reducing polyketide synthase PKS40. The gene cluster contains a putative acyl-CoA ligase (FPSE_09184) for formation of a CoA thioester polyketide. The thiol bond could be hydrolyzed by the putative thioesterase (FPSE_09186) and then accepted by the first T domain in module 1 of NRPS32. The second T domain is responsible for accepting a threonine, which is adenylated by the A domain and epimerized to the D-allo-threonine formed by the E domain. The five successive modules incorporate Ala, Ala, Gln, Tyr, and Val/Ile into the final product, which is released by cyclization. The protein is Nonribosomal peptide synthetase 32 of Fusarium pseudograminearum (strain CS3096) (Wheat and barley crown-rot fungus).